The primary structure comprises 155 residues: MGRRFDYSFQNFDPERMARASGRDLRISPKLAVEVCRELRGMMLNDALRYLDDVIALRRPVPLKRYNDSQGHKPGKGFGPGRYPVKVAKAIKKVLLNAQNNAKQKGLDPDKLRIIHIAAHRGPVLRGWYPRAFGRPTPFNEQTTHIEVVVEEVRR.

Belongs to the universal ribosomal protein uL22 family. In terms of assembly, part of the 50S ribosomal subunit.

This protein binds specifically to 23S rRNA. It makes multiple contacts with different domains of the 23S rRNA in the assembled 50S subunit and ribosome. In terms of biological role, the globular domain of the protein is located near the polypeptide exit tunnel on the outside of the subunit, while an extended beta-hairpin is found that lines the wall of the exit tunnel in the center of the 70S ribosome. The chain is Large ribosomal subunit protein uL22 from Pyrococcus abyssi (strain GE5 / Orsay).